We begin with the raw amino-acid sequence, 116 residues long: Transcription elongation factor SPT4 homolog 2 (116 aa).

Residues 19–39 (CLRCRLVKTYDQFRDAGCENC) form a C4-type zinc finger.

This sequence belongs to the SPT4 family.

The protein localises to the nucleus. May regulate transcription elongation by RNA polymerase II. May enhance transcriptional pausing at sites proximal to the promoter, which may in turn facilitate the assembly of an elongation competent RNA polymerase II complex. In Arabidopsis thaliana (Mouse-ear cress), this protein is Transcription elongation factor SPT4 homolog 2.